The sequence spans 208 residues: Uracil phosphoribosyltransferase (208 aa).

5-phospho-alpha-D-ribose 1-diphosphate contacts are provided by residues Arg78, Arg103, and 130–138; that span reads DPMLATGGS. Residues Ile193 and 198 to 200 each bind uracil; that span reads GDA. Asp199 provides a ligand contact to 5-phospho-alpha-D-ribose 1-diphosphate.

The protein belongs to the UPRTase family. Mg(2+) serves as cofactor.

It carries out the reaction UMP + diphosphate = 5-phospho-alpha-D-ribose 1-diphosphate + uracil. It functions in the pathway pyrimidine metabolism; UMP biosynthesis via salvage pathway; UMP from uracil: step 1/1. Its activity is regulated as follows. Allosterically activated by GTP. Functionally, catalyzes the conversion of uracil and 5-phospho-alpha-D-ribose 1-diphosphate (PRPP) to UMP and diphosphate. In Neisseria meningitidis serogroup C (strain 053442), this protein is Uracil phosphoribosyltransferase.